Here is a 344-residue protein sequence, read N- to C-terminus: Aurora kinase B (344 aa).

Positions 1 to 22 are disordered; it reads MAQKENSYPWPYGRQTAPSGLS. Residue threonine 35 is modified to Phosphothreonine. Position 62 is a phosphoserine (serine 62). Threonine 64 carries the phosphothreonine modification. Residues 77–327 enclose the Protein kinase domain; that stretch reads FEIGRPLGKG…LAQVSAHPWV (251 aa). Residues 83 to 91 and lysine 106 contribute to the ATP site; that span reads LGKGKFGNV. The active-site Proton acceptor is the aspartate 200. The residue at position 215 (lysine 215) is an N6-acetyllysine. A Phosphoserine modification is found at serine 227. The residue at position 232 (threonine 232) is a Phosphothreonine; by autocatalysis.

It belongs to the protein kinase superfamily. Ser/Thr protein kinase family. Aurora subfamily. Component of the chromosomal passenger complex (CPC) composed of at least BIRC5/survivin, CDCA8/borealin, INCENP, AURKB or AURKC; predominantly independent AURKB- and AURKC-containing complexes exist. Associates with RACGAP1 during M phase. Interacts with SPDYC; this interaction may be required for proper localization of active, Thr-232-phosphorylated AURKB form during prometaphase and metaphase. Interacts with p53/TP53. Interacts (via the middle kinase domain) with NOC2L (via the N- and C-terminus domains). Interacts with CDCA1. Interacts with EVI5. Interacts with JTB. Interacts with NDC80. Interacts with PSMA3. Interacts with RNF2/RING1B. Interacts with SEPTIN1. Interacts with SIRT2. Interacts with TACC1. Interacts with TTC28. In terms of processing, the phosphorylation of Thr-232 requires the binding to INCENP and occurs by means of an autophosphorylation mechanism. Thr-232 phosphorylation is indispensable for the AURKB kinase activity. Post-translationally, acetylated at Lys-215 by KAT5 at kinetochores, increasing AURKB activity and promoting accurate chromosome segregation in mitosis. Ubiquitinated by different BCR (BTB-CUL3-RBX1) E3 ubiquitin ligase complexes. Ubiquitinated by the BCR(KLHL9-KLHL13) E3 ubiquitin ligase complex, ubiquitination leads to removal from mitotic chromosomes and is required for cytokinesis. During anaphase, the BCR(KLHL21) E3 ubiquitin ligase complex recruits the CPC complex from chromosomes to the spindle midzone and mediates the ubiquitination of AURKB. Ubiquitination of AURKB by BCR(KLHL21) E3 ubiquitin ligase complex may not lead to its degradation by the proteasome. Deubiquitinated by USP35; inhibiting CDH1-mediated degradation of AURKB. As to expression, high level expression seen in the thymus. It is also expressed in the spleen, lung, testis, colon, placenta and fetal liver. Expressed during S and G2/M phase and expression is up-regulated in cancer cells during M phase. In terms of tissue distribution, not expressed in normal liver, high expression in metastatic liver.

It localises to the nucleus. Its subcellular location is the chromosome. It is found in the centromere. The protein resides in the kinetochore. The protein localises to the cytoplasm. It localises to the cytoskeleton. Its subcellular location is the spindle. It is found in the midbody. The catalysed reaction is L-seryl-[protein] + ATP = O-phospho-L-seryl-[protein] + ADP + H(+). The enzyme catalyses L-threonyl-[protein] + ATP = O-phospho-L-threonyl-[protein] + ADP + H(+). Activity is greatly increased when AURKB is within the CPC complex. In particular, AURKB-phosphorylated INCENP acts as an activator of AURKB. Positive feedback between HASPIN and AURKB contributes to CPC localization. Inhibited by ZM447439. Its function is as follows. Serine/threonine-protein kinase component of the chromosomal passenger complex (CPC), a complex that acts as a key regulator of mitosis. The CPC complex has essential functions at the centromere in ensuring correct chromosome alignment and segregation and is required for chromatin-induced microtubule stabilization and spindle assembly. Involved in the bipolar attachment of spindle microtubules to kinetochores and is a key regulator for the onset of cytokinesis during mitosis. Required for central/midzone spindle assembly and cleavage furrow formation. Key component of the cytokinesis checkpoint, a process required to delay abscission to prevent both premature resolution of intercellular chromosome bridges and accumulation of DNA damage: phosphorylates CHMP4C, leading to retain abscission-competent VPS4 (VPS4A and/or VPS4B) at the midbody ring until abscission checkpoint signaling is terminated at late cytokinesis. AURKB phosphorylates the CPC complex subunits BIRC5/survivin, CDCA8/borealin and INCENP. Phosphorylation of INCENP leads to increased AURKB activity. Other known AURKB substrates involved in centromeric functions and mitosis are CENPA, DES/desmin, GPAF, KIF2C, NSUN2, RACGAP1, SEPTIN1, VIM/vimentin, HASPIN, and histone H3. A positive feedback loop involving HASPIN and AURKB contributes to localization of CPC to centromeres. Phosphorylation of VIM controls vimentin filament segregation in cytokinetic process, whereas histone H3 is phosphorylated at 'Ser-10' and 'Ser-28' during mitosis (H3S10ph and H3S28ph, respectively). AURKB is also required for kinetochore localization of BUB1 and SGO1. Phosphorylation of p53/TP53 negatively regulates its transcriptional activity. Key regulator of active promoters in resting B- and T-lymphocytes: acts by mediating phosphorylation of H3S28ph at active promoters in resting B-cells, inhibiting RNF2/RING1B-mediated ubiquitination of histone H2A and enhancing binding and activity of the USP16 deubiquitinase at transcribed genes. Acts as an inhibitor of CGAS during mitosis: catalyzes phosphorylation of the N-terminus of CGAS during the G2-M transition, blocking CGAS liquid phase separation and activation, and thereby preventing CGAS-induced autoimmunity. Phosphorylates KRT5 during anaphase and telophase. Phosphorylates ATXN10 which promotes phosphorylation of ATXN10 by PLK1 and may play a role in the regulation of cytokinesis and stimulating the proteasomal degradation of ATXN10. The sequence is that of Aurora kinase B (AURKB) from Homo sapiens (Human).